Here is a 155-residue protein sequence, read N- to C-terminus: HTH-type transcriptional regulator IscR (155 aa).

Residues 2-136 form the HTH rrf2-type domain; it reads KLSTKGRYAM…HQTRLSDIIK (135 aa). A DNA-binding region (H-T-H motif) is located at residues 30 to 53; that stretch reads LAEVSKRQDISLPYLEQLFVKLRR. The interval 141-145 is heme regulatory motif (HRM); sequence PCPAV. C142 provides a ligand contact to [2Fe-2S] cluster.

[2Fe-2S] cluster serves as cofactor.

Its function is as follows. Regulates the transcription of several operons and genes involved in the biogenesis of Fe-S clusters and Fe-S-containing proteins. Functions as a transcriptional repressor of genes involved in iron metabolism by directly binding to the promoter region of genes preceded by the Iron-Rhodo-box motif. Binds to iscR and hemP promoter regions independently of an Fe-S cluster, but their transcriptional repression is Fe-S cluster-dependent. Seems to activate some target genes in a Fe-S cluster-independent manner. Negatively regulates its own transcription in the presence of iron only. This chain is HTH-type transcriptional regulator IscR, found in Cereibacter sphaeroides (strain ATCC 17023 / DSM 158 / JCM 6121 / CCUG 31486 / LMG 2827 / NBRC 12203 / NCIMB 8253 / ATH 2.4.1.) (Rhodobacter sphaeroides).